The chain runs to 956 residues: F-box only protein 10 (956 aa).

The F-box domain occupies 1–48 (MEAGGLPLELWRMILAYLHLPDLGRCSLVCRAWYELILSLDSTRWRQL). PbH1 repeat units follow at residues 198–217 (SGHV…QVHG) and 238–260 (VPLC…TVEG). Residues 314–367 (EGSQSPTSPASSSPKPGSKAGSQEAEVGSDGERVAQTPDSSDGGLSPSGEDEDE) form a disordered region. Composition is skewed to low complexity over residues 316–336 (SQSP…AGSQ) and 351–361 (PDSSDGGLSPS). Phosphoserine is present on residues Ser321 and Ser326. 15 PbH1 repeats span residues 427–448 (VQGC…FVCS), 449–470 (HGRA…RCIH), 471–493 (NSKI…FLRL), 494–516 (EGGG…DIRK), 538–560 (LGNG…GIYI), 561–583 (LYHG…GIAV), 584–606 (NENG…GVDI), 607–629 (RRGG…GVVV), 630–652 (GDEG…GVWM), 653–675 (MSSS…GVAV), 717–739 (RPIT…GLYV), 740–762 (QSSE…GITV), 764–786 (QSSQ…GVKV), 787–809 (EAQC…GIIT), and 832–854 (LPRS…GIAV).

As to quaternary structure, component of the SCF(FBXO10) complex consisting of CUL1, SKP1 and FBXO10. Interacts with BCL2. Interacts with PRDM1.

The protein resides in the cytoplasm. It functions in the pathway protein modification; protein ubiquitination. In terms of biological role, substrate-recognition component of the SCF (SKP1-CUL1-F-box protein)-type E3 ubiquitin ligase complex. Mediates the ubiquitination and degradation of BCL2, an antiapoptotic protein, thereby playing a role in apoptosis by controlling the stability of BCL2. Targets also the receptor for advanced glycation end products RAGE for ubiquitination and subsequent lysosomal degradation. Directly controls HGAL/GCSAM ubiquitination and degradation and thereby decreases BCR signaling. This Homo sapiens (Human) protein is F-box only protein 10 (FBXO10).